A 190-amino-acid polypeptide reads, in one-letter code: dCTP deaminase, dUMP-forming (190 aa).

DCTP contacts are provided by residues 101 to 106 (KSSLGR), aspartate 119, 127 to 129 (TLE), glutamine 148, tyrosine 162, and glutamine 174. Residue glutamate 129 is the Proton donor/acceptor of the active site. The interval 162–190 (YGSASAGSKYQGQRGPTPSRSYENFIKNT) is disordered. The segment covering 166–190 (SAGSKYQGQRGPTPSRSYENFIKNT) has biased composition (polar residues).

It belongs to the dCTP deaminase family. Homotrimer.

The enzyme catalyses dCTP + 2 H2O = dUMP + NH4(+) + diphosphate. The protein operates within pyrimidine metabolism; dUMP biosynthesis; dUMP from dCTP: step 1/1. In terms of biological role, bifunctional enzyme that catalyzes both the deamination of dCTP to dUTP and the hydrolysis of dUTP to dUMP without releasing the toxic dUTP intermediate. The chain is dCTP deaminase, dUMP-forming from Mycobacterium leprae (strain Br4923).